Here is a 512-residue protein sequence, read N- to C-terminus: mRNA export factor (512 aa).

Positions 1–15 (MATDIDMLIDLGLDL) are enriched in low complexity. The interval 1–243 (MATDIDMLID…APERKAPAAD (243 aa)) is disordered. Positions 5 to 17 (IDMLIDLGLDLSD) match the Nuclear export signal motif. 2 positions are modified to phosphoserine; by host: Ser16 and Ser18. 2 stretches are compositionally biased toward acidic residues: residues 16-26 (SDSDLDEDPPE) and 35-51 (LESD…EDME). The tract at residues 104–112 (VWSRLGARR) is interaction with host ALYREF. The Nuclear localization signal signature appears at 110-138 (ARRPSCSPEQHGGKVARLQPPPTKAQPAR). Ser114 carries the post-translational modification Phosphoserine; by host. Dimethylated arginine; by host is present on Arg138. The RGG-box stretch occupies residues 138–152 (RGGRRGRRRGRGRGG). The span at 139-149 (GGRRGRRRGRG) shows a compositional bias: basic residues. Arg148 carries the post-translational modification Omega-N-methylarginine; by host. At Arg150 the chain carries Dimethylated arginine; by host. Residues 214-233 (APPPLMTLAIAPPPADPRAP) are compositionally biased toward pro residues. The Zn(2+) site is built by Cys400, His479, Cys483, and Cys488. Residues 400 to 488 (CYLKARGLCG…HRQECSSRVC (89 aa)) form a CHC2-type zinc finger. Positions 500-512 (YVHGKYFYCNSLF) are important for homodimerization.

This sequence belongs to the HHV-1 ICP27 protein family. As to quaternary structure, homodimer. Interacts with host RBP1; this interaction facilitates the RNA polymerase recruitment to viral transcription sites. Interacts (via the RGG box) with host ALYREF/THOC4; this interaction recruits ALYREF to viral replication compartments and probably directs viral mRNA to the TAP/NFX1 pathway. Interacts with host ALYREF2. Interacts (via the RGG box) with host SRPK1; this interaction relocalizes SRPK1 to the nucleus and seems to alter its activity. Interacts with ICP4; this interaction modulates ICP4 DNA-binding activity. Interacts with host NXF1; this interaction allows efficient export of HHV-1 early and late transcripts. Post-translationally, methylated within the RGG box possibly by host PRMT1. When hypomethylated, ICP27 is exported to the cytoplasm earlier and more rapidly. Phosphorylated.

Its subcellular location is the host cytoplasm. The protein resides in the host nucleus. Functionally, multifunctional regulator of the expression of viral genes that contributes to the shutoff of host protein synthesis and mediates nuclear export of viral intronless mRNAs. Early in infection, this immediate early (EI) protein mediates the inhibition of cellular splicing. This results in the accumulation of unprocessed 3'end pre-mRNAs which can't be exported from the nucleus. Cellular protein synthesis is thereby shut off early after virus infection. Later in the infection, it helps recruit cellular RNA polymerase II to viral replication sites and promotes the nuclear export of viral intronless mRNAs by interacting with mRNAs and host NXF1/TAP. ICP27 binds to NUP62 which may provide facilitated viral mRNA export and may indirectly compete with some host cell transport receptors for binding and inhibit cellular nucleocytoplasmic transport pathways. Also stimulates translation of viral transcripts. Repression of host gene expression blocks the cell cycle at the G1 phase and prevents apoptosis. Seems to silence the 3' splice site of the promyelocytic leukemia (PML) intron 7a, thereby switching PML isoforms from PML-II to PML-V. This could be linked to the accelerated mRNA export induced by ICP27 which might not provide sufficient time for PML pre-mRNA to be spliced in the nucleus. The sequence is that of mRNA export factor from Homo sapiens (Human).